The chain runs to 230 residues: Uracil-DNA glycosylase (230 aa).

The active-site Proton acceptor is the D72.

This sequence belongs to the uracil-DNA glycosylase (UDG) superfamily. UNG family.

Its subcellular location is the cytoplasm. It catalyses the reaction Hydrolyzes single-stranded DNA or mismatched double-stranded DNA and polynucleotides, releasing free uracil.. Its function is as follows. Excises uracil residues from the DNA which can arise as a result of misincorporation of dUMP residues by DNA polymerase or due to deamination of cytosine. The chain is Uracil-DNA glycosylase from Wolinella succinogenes (strain ATCC 29543 / DSM 1740 / CCUG 13145 / JCM 31913 / LMG 7466 / NCTC 11488 / FDC 602W) (Vibrio succinogenes).